The sequence spans 236 residues: MKIGIIGAMEPEVAHLIAAMTNATSQTIAGIEFIAGTLAGKDVVVTRSGIGKVAASIATTLLIEKYAPDAMINTGSAGGFVDTLAIGDIVISSEVRHHDVDVTAFGYEIGQMAQQPAAFIPAAHLVEAANKAIAQLGEVKAIEGLICTGDSFICDPVRTQAMLKNFPTMAACEMEGAAIAQVCHQFGVPFVVIRSLSDNANNDSPVDFDSYIVKAGYHSALMVMLLLEQLNPSAVK.

Residue Glu12 is the Proton acceptor of the active site. Substrate contacts are provided by residues Gly78, Ile153, and 174–175 (ME). Asp198 functions as the Proton donor in the catalytic mechanism.

The protein belongs to the PNP/UDP phosphorylase family. MtnN subfamily.

It catalyses the reaction S-adenosyl-L-homocysteine + H2O = S-(5-deoxy-D-ribos-5-yl)-L-homocysteine + adenine. The enzyme catalyses S-methyl-5'-thioadenosine + H2O = 5-(methylsulfanyl)-D-ribose + adenine. It carries out the reaction 5'-deoxyadenosine + H2O = 5-deoxy-D-ribose + adenine. The protein operates within amino-acid biosynthesis; L-methionine biosynthesis via salvage pathway; S-methyl-5-thio-alpha-D-ribose 1-phosphate from S-methyl-5'-thioadenosine (hydrolase route): step 1/2. Catalyzes the irreversible cleavage of the glycosidic bond in both 5'-methylthioadenosine (MTA) and S-adenosylhomocysteine (SAH/AdoHcy) to adenine and the corresponding thioribose, 5'-methylthioribose and S-ribosylhomocysteine, respectively. Also cleaves 5'-deoxyadenosine, a toxic by-product of radical S-adenosylmethionine (SAM) enzymes, into 5-deoxyribose and adenine. The protein is 5'-methylthioadenosine/S-adenosylhomocysteine nucleosidase of Shewanella baltica (strain OS155 / ATCC BAA-1091).